The primary structure comprises 413 residues: Arginine biosynthesis bifunctional protein ArgJ (413 aa).

Residues threonine 158, lysine 184, threonine 195, glutamate 285, asparagine 408, and serine 413 each coordinate substrate. Residue threonine 195 is the Nucleophile of the active site.

It belongs to the ArgJ family. Heterotetramer of two alpha and two beta chains.

The protein resides in the cytoplasm. The enzyme catalyses N(2)-acetyl-L-ornithine + L-glutamate = N-acetyl-L-glutamate + L-ornithine. It catalyses the reaction L-glutamate + acetyl-CoA = N-acetyl-L-glutamate + CoA + H(+). It functions in the pathway amino-acid biosynthesis; L-arginine biosynthesis; L-ornithine and N-acetyl-L-glutamate from L-glutamate and N(2)-acetyl-L-ornithine (cyclic): step 1/1. Its pathway is amino-acid biosynthesis; L-arginine biosynthesis; N(2)-acetyl-L-ornithine from L-glutamate: step 1/4. Catalyzes two activities which are involved in the cyclic version of arginine biosynthesis: the synthesis of N-acetylglutamate from glutamate and acetyl-CoA as the acetyl donor, and of ornithine by transacetylation between N(2)-acetylornithine and glutamate. The polypeptide is Arginine biosynthesis bifunctional protein ArgJ (Mesorhizobium japonicum (strain LMG 29417 / CECT 9101 / MAFF 303099) (Mesorhizobium loti (strain MAFF 303099))).